Reading from the N-terminus, the 374-residue chain is Glutamate 5-kinase (374 aa).

Residue K9 participates in ATP binding. Positions 49, 136, and 148 each coordinate substrate. ATP contacts are provided by residues 168 to 169 and 210 to 216; these read TD and TGGMRSK. A PUA domain is found at 276-354; sequence SGTITVDSGA…EEARQYSYLH (79 aa).

The protein belongs to the glutamate 5-kinase family.

It localises to the cytoplasm. It carries out the reaction L-glutamate + ATP = L-glutamyl 5-phosphate + ADP. Its pathway is amino-acid biosynthesis; L-proline biosynthesis; L-glutamate 5-semialdehyde from L-glutamate: step 1/2. In terms of biological role, catalyzes the transfer of a phosphate group to glutamate to form L-glutamate 5-phosphate. In Geobacillus thermodenitrificans (strain NG80-2), this protein is Glutamate 5-kinase.